We begin with the raw amino-acid sequence, 883 residues long: Alanine--tRNA ligase (883 aa).

Residues histidine 563, histidine 567, cysteine 673, and histidine 677 each coordinate Zn(2+).

Belongs to the class-II aminoacyl-tRNA synthetase family. Zn(2+) serves as cofactor.

Its subcellular location is the cytoplasm. The catalysed reaction is tRNA(Ala) + L-alanine + ATP = L-alanyl-tRNA(Ala) + AMP + diphosphate. Its function is as follows. Catalyzes the attachment of alanine to tRNA(Ala) in a two-step reaction: alanine is first activated by ATP to form Ala-AMP and then transferred to the acceptor end of tRNA(Ala). Also edits incorrectly charged Ser-tRNA(Ala) and Gly-tRNA(Ala) via its editing domain. The protein is Alanine--tRNA ligase of Caulobacter sp. (strain K31).